A 439-amino-acid polypeptide reads, in one-letter code: Xylose isomerase (439 aa).

Residues His-101 and Asp-104 contribute to the active site. 7 residues coordinate Mg(2+): Glu-232, Glu-268, His-271, Asp-296, Asp-307, Asp-309, and Asp-339.

The protein belongs to the xylose isomerase family. As to quaternary structure, homotetramer. The cofactor is Mg(2+).

It is found in the cytoplasm. It carries out the reaction alpha-D-xylose = alpha-D-xylulofuranose. This is Xylose isomerase from Haemophilus influenzae (strain 86-028NP).